The chain runs to 691 residues: Guanylate cyclase soluble subunit alpha-1 (691 aa).

The disordered stretch occupies residues 26-65 (PREPLGEATGSGPASTPGQPGVCPGVPDKNPPGRLPRRKT). Residues 482–609 (TMLFSDIVGF…NNVTLANKFE (128 aa)) enclose the Guanylate cyclase domain.

Belongs to the adenylyl cyclase class-4/guanylyl cyclase family. As to quaternary structure, heterodimer of an alpha and a beta chain.

Its subcellular location is the cytoplasm. The catalysed reaction is GTP = 3',5'-cyclic GMP + diphosphate. Its activity is regulated as follows. Activated by nitric oxide in the presence of magnesium or manganese ions. This is Guanylate cyclase soluble subunit alpha-1 (GUCY1A1) from Bos taurus (Bovine).